The primary structure comprises 380 residues: Cytochrome b (380 aa).

Helical transmembrane passes span 34–54 (FGSLLAVCLMTQILTGLLLAM), 78–99 (WLIRNLHANGASFFFICIFLHI), 114–134 (WNTGVILLLTLMATAFVGYVL), and 179–199 (FFALHFLLPFAIAGITIIHLT). Heme b contacts are provided by His84 and His98. Heme b contacts are provided by His183 and His197. A ubiquinone is bound at residue His202. 4 consecutive transmembrane segments (helical) span residues 227 to 247 (FKDILGLTLMLTPFLTLALFS), 289 to 309 (LGGVLALAASVLILFLIPFLH), 321 to 341 (LSQTLFWLLVANLLILTWIGS), and 348 to 368 (FIIIGQMASLSYFTILLILFP).

It belongs to the cytochrome b family. The cytochrome bc1 complex contains 11 subunits: 3 respiratory subunits (MT-CYB, CYC1 and UQCRFS1), 2 core proteins (UQCRC1 and UQCRC2) and 6 low-molecular weight proteins (UQCRH/QCR6, UQCRB/QCR7, UQCRQ/QCR8, UQCR10/QCR9, UQCR11/QCR10 and a cleavage product of UQCRFS1). This cytochrome bc1 complex then forms a dimer. The cofactor is heme b.

The protein resides in the mitochondrion inner membrane. In terms of biological role, component of the ubiquinol-cytochrome c reductase complex (complex III or cytochrome b-c1 complex) that is part of the mitochondrial respiratory chain. The b-c1 complex mediates electron transfer from ubiquinol to cytochrome c. Contributes to the generation of a proton gradient across the mitochondrial membrane that is then used for ATP synthesis. This is Cytochrome b (MT-CYB) from Gallus gallus (Chicken).